We begin with the raw amino-acid sequence, 688 residues long: Probable glucan endo-1,3-beta-glucosidase btgC (688 aa).

Disordered regions lie at residues 1–49 (MSGP…MNGQ), 61–91 (DGRQ…NLGP), and 169–194 (QLTP…DIPY). Residues 1–307 (MSGPNRTYSF…PKPGGGNKKR (307 aa)) are Cytoplasmic-facing. Residues 175 to 188 (SVSHLSSTNPSQRN) are compositionally biased toward polar residues. Residues 308–328 (GWIVGAILAFIIIGAIVGGAV) traverse the membrane as a helical; Signal-anchor for type II membrane protein segment. Residues 329 to 688 (GGTIGHRGNE…IPDCGGKTAT (360 aa)) lie on the Extracellular side of the membrane. Residues 334–363 (HRGNEEPSSASSASSSSTQTATEDTSVNGD) are disordered. Residues 341–355 (SSASSASSSSTQTAT) show a composition bias toward low complexity. N408, N431, and N459 each carry an N-linked (GlcNAc...) asparagine glycan. E491 (proton donor) is an active-site residue. E590 (nucleophile) is an active-site residue. N609 and N635 each carry an N-linked (GlcNAc...) asparagine glycan.

It belongs to the glycosyl hydrolase 17 family.

The protein localises to the cell membrane. The enzyme catalyses Hydrolysis of (1-&gt;3)-beta-D-glucosidic linkages in (1-&gt;3)-beta-D-glucans.. In terms of biological role, glucanases play a role in cell expansion during growth, in cell-cell fusion during mating, and in spore release during sporulation. This enzyme may be involved in beta-glucan degradation. Active on laminarin and lichenan. This chain is Probable glucan endo-1,3-beta-glucosidase btgC (btgC), found in Aspergillus fumigatus (strain CBS 144.89 / FGSC A1163 / CEA10) (Neosartorya fumigata).